A 566-amino-acid chain; its full sequence is Arginine--tRNA ligase (566 aa).

The 'HIGH' region signature appears at 123 to 133 (PNIAKPFHIGH).

Belongs to the class-I aminoacyl-tRNA synthetase family. In terms of assembly, monomer.

Its subcellular location is the cytoplasm. It catalyses the reaction tRNA(Arg) + L-arginine + ATP = L-arginyl-tRNA(Arg) + AMP + diphosphate. The chain is Arginine--tRNA ligase from Halothermothrix orenii (strain H 168 / OCM 544 / DSM 9562).